A 71-amino-acid chain; its full sequence is Large ribosomal subunit protein uL29 (71 aa).

It belongs to the universal ribosomal protein uL29 family.

The polypeptide is Large ribosomal subunit protein uL29 (Methanocella arvoryzae (strain DSM 22066 / NBRC 105507 / MRE50)).